The chain runs to 32 residues: MSDINVTRLPGFVPILFPCVGDDVNTALTRGE.

The propeptide occupies 1–10 (MSDINVTRLP). Residues 11 to 18 (GFVPILFP) constitute a cross-link (cyclopeptide (Gly-Pro)). The propeptide occupies 19-32 (CVGDDVNTALTRGE).

This sequence belongs to the MSDIN fungal toxin family. In terms of processing, processed by the macrocyclase-peptidase enzyme POPB to yield a toxic cyclic octapeptide. POPB first removes 10 residues from the N-terminus. Conformational trapping of the remaining peptide forces the enzyme to release this intermediate rather than proceed to macrocyclization. The enzyme rebinds the remaining peptide in a different conformation and catalyzes macrocyclization of the N-terminal 8 residues.

Probable toxin that belongs to the MSDIN-like toxin family responsible for a large number of food poisoning cases and deaths. The sequence is that of MSDIN-like toxin proprotein 1 from Amanita bisporigera (Destroying angel).